Consider the following 350-residue polypeptide: Uroporphyrinogen decarboxylase (350 aa).

Residues 28–32 (RQAGR), phenylalanine 47, aspartate 78, tyrosine 155, serine 210, and histidine 325 contribute to the substrate site.

The protein belongs to the uroporphyrinogen decarboxylase family. Homodimer.

The protein resides in the cytoplasm. It catalyses the reaction uroporphyrinogen III + 4 H(+) = coproporphyrinogen III + 4 CO2. Its pathway is porphyrin-containing compound metabolism; protoporphyrin-IX biosynthesis; coproporphyrinogen-III from 5-aminolevulinate: step 4/4. Functionally, catalyzes the decarboxylation of four acetate groups of uroporphyrinogen-III to yield coproporphyrinogen-III. The chain is Uroporphyrinogen decarboxylase from Nostoc sp. (strain PCC 7120 / SAG 25.82 / UTEX 2576).